A 160-amino-acid polypeptide reads, in one-letter code: Surface-adhesin protein E (160 aa).

Positions 1–15 are cleaved as a signal peptide; the sequence is MKKIILTLSLGLLTA. A lipid anchor (N-palmitoyl cysteine) is attached at Cys16. The S-diacylglycerol cysteine moiety is linked to residue Cys16. The interaction with laminin and plasminogen stretch occupies residues 41-68; the sequence is IRLVKNVNYYIDSESIWVDNQEPQIVHF. Residues 84 to 108 form an interaction with vitronectin and epithelial cells region; it reads PKRYARSVRQYKILNCANYHLTQVR.

In terms of assembly, homodimer. Interacts with host vitronectin, laminin and plasminogen. Can interact with both immobilized and soluble vitronectin.

It is found in the cell outer membrane. It localises to the cell surface. Acts as a multifunctional adhesin involved in direct interactions with host epithelial cells and host proteins, including vitronectin, laminin and plasminogen. In addition, interaction with serum vitronectin plays an important role in bacterial serum resistance, and conversion of plasminogen to plasmin at the cell surface aids in immune evasion and contributes to bacterial virulence. Induces a pro-inflammatory epithelial cell response, leading to interleukin-8 (IL-8) secretion and up-regulation of ICAM1. This is Surface-adhesin protein E (pe) from Haemophilus influenzae (strain NTHi 3655).